The chain runs to 376 residues: RNA binding protein fox-1 homolog 1 (376 aa).

The segment at 1 to 126 (MEEKGSRMVQ…QPKRLHVSNI (126 aa)) is disordered. A compositionally biased stretch (polar residues) spans 72-89 (QTHSEQSPADTNAQTVSG). Residues 90-101 (TATQTDDAAPTD) are compositionally biased toward low complexity. Polar residues predominate over residues 102–115 (GQPQTQPSENTENK). One can recognise an RRM domain in the interval 119 to 195 (KRLHVSNIPF…RKIEVNNATA (77 aa)). The residue at position 319 (Arg-319) is an Asymmetric dimethylarginine.

As to quaternary structure, binds to the C-terminus of ATXN2.

The protein resides in the nucleus. It is found in the cytoplasm. RNA-binding protein that regulates alternative splicing events by binding to 5'-UGCAUGU-3' elements. Prevents binding of U2AF2 to the 3'-splice site. Regulates alternative splicing of tissue-specific exons and of differentially spliced exons during erythropoiesis. The chain is RNA binding protein fox-1 homolog 1 (RBFOX1) from Macaca fascicularis (Crab-eating macaque).